Reading from the N-terminus, the 102-residue chain is uncharacterized protein (102 aa).

Residues 77–96 form a helical membrane-spanning segment; it reads FFSACVAKSYSSFFISICIL.

The protein resides in the membrane. This is an uncharacterized protein from Saccharomyces cerevisiae (strain ATCC 204508 / S288c) (Baker's yeast).